The sequence spans 425 residues: Bifunctional phosphoribosylaminoimidazole carboxylase/phosphoribosylaminoimidazole succinocarboxamide synthetase (425 aa).

A2 is subject to N-acetylalanine. Residues 2-260 form an SAICAR synthetase domain region; it reads ATAVVVNIGK…WVADRVELLL (259 aa). Position 22 is a phosphotyrosine (Y22). N6-acetyllysine is present on K36. S107 is modified (phosphoserine). At T238 the chain carries Phosphothreonine. N6-acetyllysine is present on K247. The tract at residues 261–266 is linker; the sequence is KSDSQC. The tract at residues 267 to 425 is AIR carboxylase domain; sequence RVVVLMGSTS…ADKKVRQCNL (159 aa). S274 carries the phosphoserine modification. S332 contributes to the CO2 binding site.

In the N-terminal section; belongs to the SAICAR synthetase family. This sequence in the C-terminal section; belongs to the AIR carboxylase family. Class II subfamily. In terms of assembly, homooctamer.

The enzyme catalyses 5-amino-1-(5-phospho-D-ribosyl)imidazole-4-carboxylate + L-aspartate + ATP = (2S)-2-[5-amino-1-(5-phospho-beta-D-ribosyl)imidazole-4-carboxamido]succinate + ADP + phosphate + 2 H(+). It carries out the reaction 5-amino-1-(5-phospho-D-ribosyl)imidazole-4-carboxylate + H(+) = 5-amino-1-(5-phospho-beta-D-ribosyl)imidazole + CO2. The protein operates within purine metabolism; IMP biosynthesis via de novo pathway; 5-amino-1-(5-phospho-D-ribosyl)imidazole-4-carboxamide from 5-amino-1-(5-phospho-D-ribosyl)imidazole-4-carboxylate: step 1/2. Its pathway is purine metabolism; IMP biosynthesis via de novo pathway; 5-amino-1-(5-phospho-D-ribosyl)imidazole-4-carboxylate from 5-amino-1-(5-phospho-D-ribosyl)imidazole (carboxylase route): step 1/1. Its function is as follows. Bifunctional phosphoribosylaminoimidazole carboxylase and phosphoribosylaminoimidazole succinocarboxamide synthetase catalyzing two reactions of the de novo purine biosynthetic pathway. This chain is Bifunctional phosphoribosylaminoimidazole carboxylase/phosphoribosylaminoimidazole succinocarboxamide synthetase, found in Mus musculus (Mouse).